The sequence spans 1486 residues: Chromosome partition protein MukB (1486 aa).

34 to 41 (GGNGAGKS) is a binding site for ATP. Coiled-coil stretches lie at residues 326–418 (LEAD…QYNQ), 444–480 (LETF…QAYQ), and 509–603 (RHLA…RAPV). Residues 666–783 (PGGSEDQRLN…EVPLFGRAAR (118 aa)) form a flexible hinge region. Coiled-coil stretches lie at residues 835–923 (EAEI…AKLE), 977–1115 (EMLS…TAKA), and 1209–1266 (VEAI…QNVS).

Belongs to the SMC family. MukB subfamily. Homodimerization via its hinge domain. Binds to DNA via its C-terminal region. Interacts, and probably forms a ternary complex, with MukE and MukF via its C-terminal region. The complex formation is stimulated by calcium or magnesium. Interacts with tubulin-related protein FtsZ.

The protein resides in the cytoplasm. It is found in the nucleoid. In terms of biological role, plays a central role in chromosome condensation, segregation and cell cycle progression. Functions as a homodimer, which is essential for chromosome partition. Involved in negative DNA supercoiling in vivo, and by this means organize and compact chromosomes. May achieve or facilitate chromosome segregation by condensation DNA from both sides of a centrally located replisome during cell division. In Escherichia coli (strain K12 / MC4100 / BW2952), this protein is Chromosome partition protein MukB.